The following is a 147-amino-acid chain: MNNPDDVLLINRFLRQQHVLTLCAGSGMDMWCASCFYVFDENQMALFLMTEKHTRHSELMLINPQVAGTVATQSRTIALIKGIQYRGDISLLSGDAEQAARSRYCRRFPVAKVSSAPLWQLNLLEIKMTNNALGFGKKLHWSRVEPL.

Belongs to the UPF0306 family.

The sequence is that of UPF0306 protein YPK_3704 from Yersinia pseudotuberculosis serotype O:3 (strain YPIII).